A 446-amino-acid polypeptide reads, in one-letter code: Tubulin beta-6 chain (446 aa).

An MREI motif motif is present at residues 1–4 (MREI). GTP contacts are provided by Q11, E69, S138, G142, T143, and G144. E69 is a Mg(2+) binding site. S172 is subject to Phosphoserine; by CDK1. GTP contacts are provided by N204 and N226. Residue E438 is modified to 5-glutamyl polyglutamate.

The protein belongs to the tubulin family. As to quaternary structure, dimer of alpha and beta chains. A typical microtubule is a hollow water-filled tube with an outer diameter of 25 nm and an inner diameter of 15 nM. Alpha-beta heterodimers associate head-to-tail to form protofilaments running lengthwise along the microtubule wall with the beta-tubulin subunit facing the microtubule plus end conferring a structural polarity. Microtubules usually have 13 protofilaments but different protofilament numbers can be found in some organisms and specialized cells. It depends on Mg(2+) as a cofactor. Post-translationally, some glutamate residues at the C-terminus are polyglycylated, resulting in polyglycine chains on the gamma-carboxyl group. Glycylation is mainly limited to tubulin incorporated into axonemes (cilia and flagella) whereas glutamylation is prevalent in neuronal cells, centrioles, axonemes, and the mitotic spindle. Both modifications can coexist on the same protein on adjacent residues, and lowering polyglycylation levels increases polyglutamylation, and reciprocally. Cilia and flagella glycylation is required for their stability and maintenance. Flagella glycylation controls sperm motility. Some glutamate residues at the C-terminus are polyglutamylated, resulting in polyglutamate chains on the gamma-carboxyl group. Polyglutamylation plays a key role in microtubule severing by spastin (SPAST). SPAST preferentially recognizes and acts on microtubules decorated with short polyglutamate tails: severing activity by SPAST increases as the number of glutamates per tubulin rises from one to eight, but decreases beyond this glutamylation threshold. Glutamylation is also involved in cilia motility. In terms of processing, phosphorylated on Ser-172 by CDK1 during the cell cycle, from metaphase to telophase, but not in interphase. This phosphorylation inhibits tubulin incorporation into microtubules.

It localises to the cytoplasm. It is found in the cytoskeleton. Functionally, tubulin is the major constituent of microtubules, a cylinder consisting of laterally associated linear protofilaments composed of alpha- and beta-tubulin heterodimers. Microtubules grow by the addition of GTP-tubulin dimers to the microtubule end, where a stabilizing cap forms. Below the cap, tubulin dimers are in GDP-bound state, owing to GTPase activity of alpha-tubulin. The sequence is that of Tubulin beta-6 chain (TUBB6) from Bos taurus (Bovine).